A 271-amino-acid chain; its full sequence is Small ribosomal subunit protein uS2 (271 aa).

The disordered stretch occupies residues 223 to 271 (RALAGSEEGEATEEVTPASEAEKQEVLAEAMSEEGDALQESEVVEEEEK). A compositionally biased stretch (acidic residues) spans 253-271 (MSEEGDALQESEVVEEEEK).

Belongs to the universal ribosomal protein uS2 family.

This Wolinella succinogenes (strain ATCC 29543 / DSM 1740 / CCUG 13145 / JCM 31913 / LMG 7466 / NCTC 11488 / FDC 602W) (Vibrio succinogenes) protein is Small ribosomal subunit protein uS2.